The primary structure comprises 304 residues: Glutaminase (304 aa).

The substrate site is built by Ser-63, Asn-114, Glu-158, Asn-165, Tyr-189, Tyr-240, and Val-258.

The protein belongs to the glutaminase family. As to quaternary structure, homotetramer.

The catalysed reaction is L-glutamine + H2O = L-glutamate + NH4(+). This is Glutaminase from Shewanella sp. (strain ANA-3).